The sequence spans 343 residues: MMPEDYDFINACYGRPVTRTPVWLMRQAGRYLPQYRKIRERVKFLELCKTPELAAEVTLQPVDALGVDAAILFSDILIPIEAMGQNLFYRPAPVLEPPVRTAADVEALRVLQPEQDVPFVLETIRLLRRELDGRVPLIGFGGAPFTLACYMVEGAGSRHFLALKRLMYQAPETYARLMDKITDTSIVYLRAQAEAGAQALQVFDSWGGILSPADYQRYVLPYSRRLLSALGDFGIPLIHFVKGAGAMLDLVAMAGGQVVGLDWCTSLNRARDILGNGMAVQGNLDPSVLLGAQDIIEREVRRILDENAGRPGHIFNLGHGILPEVPPENAAFLVDCVHRLTQS.

Residues 26 to 30 (RQAGR), Asp-75, Tyr-150, Ser-205, and His-319 contribute to the substrate site.

Belongs to the uroporphyrinogen decarboxylase family. Homodimer.

Its subcellular location is the cytoplasm. It catalyses the reaction uroporphyrinogen III + 4 H(+) = coproporphyrinogen III + 4 CO2. It functions in the pathway porphyrin-containing compound metabolism; protoporphyrin-IX biosynthesis; coproporphyrinogen-III from 5-aminolevulinate: step 4/4. Functionally, catalyzes the decarboxylation of four acetate groups of uroporphyrinogen-III to yield coproporphyrinogen-III. This chain is Uroporphyrinogen decarboxylase, found in Syntrophotalea carbinolica (strain DSM 2380 / NBRC 103641 / GraBd1) (Pelobacter carbinolicus).